The chain runs to 329 residues: Putative oligopeptide transport ATP-binding protein YkfD (329 aa).

The ABC transporter domain occupies 7-252; that stretch reads LEVSQLKMHF…PLHPYTKALL (246 aa). 44–51 serves as a coordination point for ATP; the sequence is GESGCGKS.

Belongs to the ABC transporter superfamily.

The chain is Putative oligopeptide transport ATP-binding protein YkfD (ykfD) from Bacillus subtilis (strain 168).